The chain runs to 230 residues: Demethylmenaquinone methyltransferase (230 aa).

S-adenosyl-L-methionine contacts are provided by residues Thr-62, Asp-80, 102–103 (DG), and Ser-119.

This sequence belongs to the class I-like SAM-binding methyltransferase superfamily. MenG/UbiE family.

It carries out the reaction a 2-demethylmenaquinol + S-adenosyl-L-methionine = a menaquinol + S-adenosyl-L-homocysteine + H(+). Its pathway is quinol/quinone metabolism; menaquinone biosynthesis; menaquinol from 1,4-dihydroxy-2-naphthoate: step 2/2. Functionally, methyltransferase required for the conversion of demethylmenaquinol (DMKH2) to menaquinol (MKH2). The polypeptide is Demethylmenaquinone methyltransferase (Streptomyces griseus subsp. griseus (strain JCM 4626 / CBS 651.72 / NBRC 13350 / KCC S-0626 / ISP 5235)).